Here is a 383-residue protein sequence, read N- to C-terminus: Lipid-A-disaccharide synthase (383 aa).

It belongs to the LpxB family.

The catalysed reaction is a lipid X + a UDP-2-N,3-O-bis[(3R)-3-hydroxyacyl]-alpha-D-glucosamine = a lipid A disaccharide + UDP + H(+). Its pathway is bacterial outer membrane biogenesis; LPS lipid A biosynthesis. Functionally, condensation of UDP-2,3-diacylglucosamine and 2,3-diacylglucosamine-1-phosphate to form lipid A disaccharide, a precursor of lipid A, a phosphorylated glycolipid that anchors the lipopolysaccharide to the outer membrane of the cell. The chain is Lipid-A-disaccharide synthase from Aliivibrio fischeri (strain ATCC 700601 / ES114) (Vibrio fischeri).